A 210-amino-acid polypeptide reads, in one-letter code: Hypoxanthine-guanine phosphoribosyltransferase (210 aa).

Residues lysine 54, 113 to 121 (EDILDTALT), lysine 145, and aspartate 173 each bind GMP. The active-site Proton acceptor is the aspartate 117. Residue aspartate 173 coordinates Mg(2+).

It belongs to the purine/pyrimidine phosphoribosyltransferase family. Mg(2+) serves as cofactor.

Its subcellular location is the cytoplasm. The enzyme catalyses IMP + diphosphate = hypoxanthine + 5-phospho-alpha-D-ribose 1-diphosphate. It catalyses the reaction GMP + diphosphate = guanine + 5-phospho-alpha-D-ribose 1-diphosphate. It functions in the pathway purine metabolism; IMP biosynthesis via salvage pathway; IMP from hypoxanthine: step 1/1. Functionally, converts guanine to guanosine monophosphate, and hypoxanthine to inosine monophosphate. Transfers the 5-phosphoribosyl group from 5-phosphoribosylpyrophosphate onto the purine. Plays a central role in the generation of purine nucleotides through the purine salvage pathway. The polypeptide is Hypoxanthine-guanine phosphoribosyltransferase (HGPRT) (Trypanosoma brucei brucei).